Here is a 459-residue protein sequence, read N- to C-terminus: Cysteine--tRNA ligase (459 aa).

A Zn(2+)-binding site is contributed by C28. The short motif at 30-40 is the 'HIGH' region element; it reads MTVYDFCHLGH. Residues C209, H234, and E238 each coordinate Zn(2+). The short motif at 266–270 is the 'KMSKS' region element; it reads KMAKS. Residue K269 participates in ATP binding. The tract at residues 440–459 is disordered; the sequence is QARGIELEDTPEGTKWRRTR.

The protein belongs to the class-I aminoacyl-tRNA synthetase family. Monomer. Requires Zn(2+) as cofactor.

It is found in the cytoplasm. It catalyses the reaction tRNA(Cys) + L-cysteine + ATP = L-cysteinyl-tRNA(Cys) + AMP + diphosphate. The chain is Cysteine--tRNA ligase from Halorhodospira halophila (strain DSM 244 / SL1) (Ectothiorhodospira halophila (strain DSM 244 / SL1)).